We begin with the raw amino-acid sequence, 452 residues long: MLRVGRIGTKTLASSSLRFVAGARPKSTLTEAVLETTGLLKTTPQNPEWSGAVKQASRLVETDTPIRDPFSIVSQEMSTLANNIGSLIGSGHPTLNKVATYYFQSEGKHVRPLIVLLLSRALSAIPESERDRGTFDASDVTENVGELNPEPSINDPLSPIEILHGINPDIVLNPLSRPSDPLPYESNGILPKQRRLAEIVEMIHTASLLHDDVIDNSATRRGSPTGNVAFGNKMAILAGDFLLGRASVAIARLRNAEVIELLSTTIANLVEGEFMQLKNTIVDNSEIANKATFEYYIHKTYLKTASLMSKSCRAAAVLSGARNPIVDASYKFGKNLGLCFQVVDDMLDYSEGESHLGKPAGADLKLGLATAPVLFAWEKYPELGDMIKRKFDGPGDVERARFLVQQADGLSRTRELAQKYCDEAVANLDLLPYSESREALRNLTMKMMNRSK.

The isopentenyl diphosphate site is built by Lys-108, Arg-111, and His-204. Mg(2+)-binding residues include Asp-211 and Asp-215. Arg-220 provides a ligand contact to an all-trans-polyprenyl diphosphate. Arg-221 serves as a coordination point for isopentenyl diphosphate. An all-trans-polyprenyl diphosphate-binding residues include Lys-303, Thr-304, Gln-341, and Lys-358.

Belongs to the FPP/GGPP synthase family. Mg(2+) serves as cofactor.

The protein resides in the mitochondrion. It participates in cofactor biosynthesis; ubiquinone biosynthesis. Assembly of polyisoprenoid side chains. The polyprenyl synthase of coenzyme Q biosynthesis catalyzes the formation from isopentenyl diphosphate of all trans-polyprenyl pyrophosphates generally ranging in length of between 6 and 10 isoprene units depending on the species. The polypeptide is Probable hexaprenyl pyrophosphate synthase, mitochondrial (COQ1) (Yarrowia lipolytica (strain CLIB 122 / E 150) (Yeast)).